A 489-amino-acid polypeptide reads, in one-letter code: Beta-glucosidase 14 (489 aa).

The first 21 residues, 1-21, serve as a signal peptide directing secretion; the sequence is MTSKYFSVLVFIILASNEVVA. Gln-49 is an a beta-D-glucoside binding site. The N-linked (GlcNAc...) asparagine glycan is linked to Asn-80. A beta-D-glucoside is bound by residues His-153 and 198 to 199; that span reads NE. The Proton donor role is filled by Glu-199. Cys-218 and Cys-226 are disulfide-bonded. The N-linked (GlcNAc...) asparagine glycan is linked to Asn-225. An a beta-D-glucoside-binding site is contributed by Tyr-343. An N-linked (GlcNAc...) asparagine glycan is attached at Asn-357. A beta-D-glucoside is bound by residues Glu-396, Trp-441, 448 to 449, and Phe-457; that span reads EW. Glu-396 serves as the catalytic Nucleophile.

This sequence belongs to the glycosyl hydrolase 1 family.

It catalyses the reaction Hydrolysis of terminal, non-reducing beta-D-glucosyl residues with release of beta-D-glucose.. This is Beta-glucosidase 14 from Arabidopsis thaliana (Mouse-ear cress).